We begin with the raw amino-acid sequence, 454 residues long: Aspartokinase 3 (454 aa).

ACT domains lie at 312-388 (ISKY…ALIM) and 389-454 (VVGE…VLIS).

Belongs to the aspartokinase family. Monomer.

The catalysed reaction is L-aspartate + ATP = 4-phospho-L-aspartate + ADP. Its pathway is amino-acid biosynthesis; L-lysine biosynthesis via DAP pathway; (S)-tetrahydrodipicolinate from L-aspartate: step 1/4. It participates in amino-acid biosynthesis; L-methionine biosynthesis via de novo pathway; L-homoserine from L-aspartate: step 1/3. It functions in the pathway amino-acid biosynthesis; L-threonine biosynthesis; L-threonine from L-aspartate: step 1/5. Catalyzes the phosphorylation of the beta-carboxyl group of aspartic acid with ATP to yield 4-phospho-L-aspartate, which is involved in the branched biosynthetic pathway leading to the biosynthesis of amino acids threonine, isoleucine and methionine. This is Aspartokinase 3 (yclM) from Bacillus subtilis (strain 168).